The chain runs to 279 residues: Inorganic pyrophosphatase (279 aa).

Arg100 contributes to the diphosphate binding site. Residues Asp132, Asp137, and Asp169 each coordinate Mg(2+).

It belongs to the PPase family. Requires Mg(2+) as cofactor.

It catalyses the reaction diphosphate + H2O = 2 phosphate + H(+). The sequence is that of Inorganic pyrophosphatase (ppa1) from Dictyostelium discoideum (Social amoeba).